Reading from the N-terminus, the 367-residue chain is Cystinosin (367 aa).

The signal sequence occupies residues 1–22 (MIRRWLVIFILFPLQLIEKCES). At 23–125 (TVDFSVPPIV…LVIHSNIVSI (103 aa)) the chain is on the lumenal side. N-linked (GlcNAc...) asparagine glycans are attached at residues Asn51, Asn66, Asn84, Asn104, and Asn107. One can recognise a PQ-loop 1 domain in the interval 123 to 189 (VSIINQVIGW…LFWVPSIKEQ (67 aa)). The chain crosses the membrane as a helical span at residues 126–150 (INQVIGWIYFVAWSVSFYPQVITNW). Over 151–159 (RRKSVVGLS) the chain is Cytoplasmic. The chain crosses the membrane as a helical span at residues 160 to 179 (FDFVVLNLMGFVAYSVFNIG). An L-cystine-binding site is contributed by Asn166. Residues 180–202 (LFWVPSIKEQFLLKYPNGVNPVD) are Lumenal-facing. A helical membrane pass occupies residues 203 to 225 (SNDVFFSLHAVALTLVVIVQCLL). Asp205 provides a ligand contact to H(+). The Cytoplasmic segment spans residues 226 to 234 (YERGSQRVS). Residues 235 to 257 (WLAISFLVLSWLFTLIALIMAAV) traverse the membrane as a helical segment. At 258-263 (GATTWL) the chain is on the lumenal side. Positions 263-328 (LQFLFCFSYI…QSYNNDQWTL (66 aa)) constitute a PQ-loop 2 domain. The helical transmembrane segment at 264 to 289 (QFLFCFSYIKLAVTLVKYFPQAYMNF) threads the bilayer. L-cystine is bound by residues Lys273, Lys280, and Tyr281. Over 290–298 (HYKSTEGWS) the chain is Cytoplasmic. A helical transmembrane segment spans residues 299-308 (IGNVLLDFTG). The L-cystine site is built by Asn301 and Asp305. Asp305 contacts H(+). Residues 309–331 (GSFSLLQMFLQSYNNDQWTLIFG) are Lumenal-facing. The helical transmembrane segment at 332–354 (DPTKFGLGIFSIIFDVVFFIQHF) threads the bilayer. H(+) is bound at residue Asp346. Residues 355–367 (CLYRKKPGYDQLN) are Cytoplasmic-facing. A Lysosomal targeting motif motif is present at residues 362 to 366 (GYDQL).

This sequence belongs to the cystinosin family. Interacts with components of the V-ATPase complex. Interacts with components of the Ragulator complex. Interacts with RRAGA/RagA and RRAGC/RagC. Interacts with AP-3 complex subunit mu (AP3M1 or AP3M2).

The protein localises to the lysosome membrane. The protein resides in the melanosome membrane. It catalyses the reaction L-cystine(out) + H(+)(out) = L-cystine(in) + H(+)(in). Switches between a lumen- and a cytosol-open conformation: pH induces conformational changes and shifts the equilibrium to facilitate the transition between the lumen- and cytosol-open conformation, thereby promoting cystine transport. Protonation of specific aspartate residues (Asp-205, Asp-305 and Asp-346) favors the cytosol-open conformation. Its function is as follows. Cystine/H(+) symporter that mediates export of cystine, the oxidized dimer of cysteine, from lysosomes. Plays an important role in melanin synthesis by catalyzing cystine export from melanosomes, possibly by inhibiting pheomelanin synthesis. In addition to cystine export, also acts as a positive regulator of mTORC1 signaling in kidney proximal tubular cells, via interactions with components of the v-ATPase and Ragulator complexes. Also involved in small GTPase-regulated vesicle trafficking and lysosomal localization of LAMP2A, independently of cystine transporter activity. The polypeptide is Cystinosin (Bos taurus (Bovine)).